Here is a 501-residue protein sequence, read N- to C-terminus: L-arabinose isomerase (501 aa).

Mn(2+)-binding residues include E306, E333, H350, and H449.

It belongs to the arabinose isomerase family. Mn(2+) serves as cofactor.

The enzyme catalyses beta-L-arabinopyranose = L-ribulose. It functions in the pathway carbohydrate degradation; L-arabinose degradation via L-ribulose; D-xylulose 5-phosphate from L-arabinose (bacterial route): step 1/3. Catalyzes the conversion of L-arabinose to L-ribulose. This Mycolicibacterium smegmatis (strain ATCC 700084 / mc(2)155) (Mycobacterium smegmatis) protein is L-arabinose isomerase.